The following is a 217-amino-acid chain: MSTANRTFTGLLGTKLGMTQVWDENNKLIPVTVVQITPNVVTQVRTPEVDGYGAIQIAYGQIDPRKADKPSTGHFDKAGVTPRRHLTEVRTADFAEYALGQEITVGAFEPGTKVDVVGTSKGKGFAGVMKRHNFKGVSASHGSHRNHRKPGSIGASSTPSRVFKGMRMAGRMGGERVTVLNLVVHSVDAEKGLLLVKGAVPGARGRIVFVRNAVKGK.

Residues 137–160 form a disordered region; that stretch reads VSASHGSHRNHRKPGSIGASSTPS.

Belongs to the universal ribosomal protein uL3 family. Part of the 50S ribosomal subunit. Forms a cluster with proteins L14 and L19.

Functionally, one of the primary rRNA binding proteins, it binds directly near the 3'-end of the 23S rRNA, where it nucleates assembly of the 50S subunit. This is Large ribosomal subunit protein uL3 from Clavibacter michiganensis subsp. michiganensis (strain NCPPB 382).